A 384-amino-acid polypeptide reads, in one-letter code: PqqA peptide cyclase (384 aa).

The region spanning 5 to 220 (VGLPLWLLAE…TNEYREKLKA (216 aa)) is the Radical SAM core domain. C19, C23, and C26 together coordinate [4Fe-4S] cluster.

The protein belongs to the radical SAM superfamily. PqqE family. Interacts with PqqD. The interaction is necessary for activity of PqqE. [4Fe-4S] cluster serves as cofactor.

The enzyme catalyses [PQQ precursor protein] + S-adenosyl-L-methionine = E-Y cross-linked-[PQQ precursor protein] + 5'-deoxyadenosine + L-methionine + H(+). Its pathway is cofactor biosynthesis; pyrroloquinoline quinone biosynthesis. Catalyzes the cross-linking of a glutamate residue and a tyrosine residue in the PqqA protein as part of the biosynthesis of pyrroloquinoline quinone (PQQ). The chain is PqqA peptide cyclase from Acinetobacter baumannii (strain ACICU).